The primary structure comprises 141 residues: Photosystem II protein PSBR, chloroplastic (141 aa).

Residues 1 to 27 constitute a chloroplast transit peptide; the sequence is MATMQISAKGLAPLRPRVSSRRVVKPV. Phosphothreonine occurs at positions 34 and 37. Ser-43 is subject to Phosphoserine. A helical transmembrane segment spans residues 114–134; the sequence is GLIAWAGLVLVLLAVGVNLII.

The protein belongs to the psbR family.

Its subcellular location is the plastid. It localises to the chloroplast thylakoid membrane. In terms of biological role, associated with the oxygen-evolving complex of photosystem II (PSII). Is required for the stable binding of LHCSR3 to PSII-LHCII supercomplexes and is essential for efficient energy-dependent quenching and the integrity of the PSII-LHCII-LHCSR3 supercomplex under continuous high light. This Chlamydomonas reinhardtii (Chlamydomonas smithii) protein is Photosystem II protein PSBR, chloroplastic.